The following is a 184-amino-acid chain: Class II hydrophobin 6 (184 aa).

The N-terminal stretch at Met1–Ala16 is a signal peptide. 4 disulfides stabilise this stretch: Cys122–Cys169, Cys130–Cys160, Cys131–Cys143, and Cys170–Cys181.

The protein belongs to the cerato-ulmin hydrophobin family. As to quaternary structure, homotetramer. Further self-assembles to form highly ordered films at water-air interfaces through intermolecular interactions. As to expression, expressed in the mycellium.

The protein resides in the secreted. In terms of biological role, aerial growth, conidiation, and dispersal of filamentous fungi in the environment rely upon a capability of their secreting small amphipathic proteins called hydrophobins (HPBs) with low sequence identity. Class I can self-assemble into an outermost layer of rodlet bundles on aerial cell surfaces, conferring cellular hydrophobicity that supports fungal growth, development and dispersal; whereas Class II form highly ordered films at water-air interfaces through intermolecular interactions but contribute nothing to the rodlet structure. Hcf-6 is a class II hydrophobin that is involved in adhesion and in tomato plants infection. Is secreted to form a coat both around and beneath the fungus. The polypeptide is Class II hydrophobin 6 (Passalora fulva (Tomato leaf mold)).